The sequence spans 173 residues: Tumor necrosis factor ligand superfamily member 18 (173 aa).

The Cytoplasmic portion of the chain corresponds to 1-20; that stretch reads MEEMPLRESSPQRAERCKKS. Residues 21 to 41 form a helical; Signal-anchor for type II membrane protein membrane-spanning segment; it reads WLLCIVALLLMLLCSLGTLIY. One can recognise a THD domain in the interval 40–166; sequence IYTSLKPTAI…TNTYWGIILM (127 aa). Over 42–173 the chain is Extracellular; the sequence is TSLKPTAIES…ILMPDLPFIS (132 aa). Cys-52 and Cys-72 are disulfide-bonded. Residue Asn-74 is glycosylated (N-linked (GlcNAc...) asparagine).

It belongs to the tumor necrosis factor family. As to quaternary structure, homotrimer. Homodimer. In terms of processing, N-glycosylated. Detected in immature and mature dendritic cells and in macrophages (at protein level). Detected in spleen, lung, heart, thymus, monocytes, macrophages, B-cells and dendritic cells.

The protein localises to the cell membrane. Its function is as follows. Cytokine that binds to TNFRSF18/AITR/GITR. Regulates T-cell responses. Can function as costimulator and lower the threshold for T-cell activation and T-cell proliferation. Important for interactions between activated T-lymphocytes and endothelial cells. Mediates activation of NF-kappa-B. Triggers increased phosphorylation of STAT1 and up-regulates expression of VCAM1 and ICAM1. Promotes leukocyte adhesion to endothelial cells. Regulates migration of monocytes from the splenic reservoir to sites of inflammation. In Mus musculus (Mouse), this protein is Tumor necrosis factor ligand superfamily member 18 (Tnfsf18).